Reading from the N-terminus, the 729-residue chain is DNA topoisomerase 3 (729 aa).

A Toprim domain is found at lysine 3–threonine 136. The Mg(2+) site is built by glutamate 9 and aspartate 105. Residues tyrosine 153–valine 594 form the Topo IA-type catalytic domain. The segment at asparagine 187 to glutamine 192 is interaction with DNA. The active-site O-(5'-phospho-DNA)-tyrosine intermediate is the tyrosine 310. Basic and acidic residues predominate over residues glutamate 686–glutamate 713. A disordered region spans residues glutamate 686–phenylalanine 719.

It belongs to the type IA topoisomerase family. Requires Mg(2+) as cofactor.

The enzyme catalyses ATP-independent breakage of single-stranded DNA, followed by passage and rejoining.. Functionally, releases the supercoiling and torsional tension of DNA, which is introduced during the DNA replication and transcription, by transiently cleaving and rejoining one strand of the DNA duplex. Introduces a single-strand break via transesterification at a target site in duplex DNA. The scissile phosphodiester is attacked by the catalytic tyrosine of the enzyme, resulting in the formation of a DNA-(5'-phosphotyrosyl)-enzyme intermediate and the expulsion of a 3'-OH DNA strand. The free DNA strand then undergoes passage around the unbroken strand, thus removing DNA supercoils. Finally, in the religation step, the DNA 3'-OH attacks the covalent intermediate to expel the active-site tyrosine and restore the DNA phosphodiester backbone. This chain is DNA topoisomerase 3, found in Bacillus cereus (strain ATCC 14579 / DSM 31 / CCUG 7414 / JCM 2152 / NBRC 15305 / NCIMB 9373 / NCTC 2599 / NRRL B-3711).